Reading from the N-terminus, the 95-residue chain is Aspartyl/glutamyl-tRNA(Asn/Gln) amidotransferase subunit C (95 aa).

The protein belongs to the GatC family. As to quaternary structure, heterotrimer of A, B and C subunits.

It carries out the reaction L-glutamyl-tRNA(Gln) + L-glutamine + ATP + H2O = L-glutaminyl-tRNA(Gln) + L-glutamate + ADP + phosphate + H(+). The enzyme catalyses L-aspartyl-tRNA(Asn) + L-glutamine + ATP + H2O = L-asparaginyl-tRNA(Asn) + L-glutamate + ADP + phosphate + 2 H(+). Functionally, allows the formation of correctly charged Asn-tRNA(Asn) or Gln-tRNA(Gln) through the transamidation of misacylated Asp-tRNA(Asn) or Glu-tRNA(Gln) in organisms which lack either or both of asparaginyl-tRNA or glutaminyl-tRNA synthetases. The reaction takes place in the presence of glutamine and ATP through an activated phospho-Asp-tRNA(Asn) or phospho-Glu-tRNA(Gln). The chain is Aspartyl/glutamyl-tRNA(Asn/Gln) amidotransferase subunit C from Rhizobium rhizogenes (strain K84 / ATCC BAA-868) (Agrobacterium radiobacter).